The following is a 101-amino-acid chain: Apolipoprotein C-II (101 aa).

The first 22 residues, 1–22, serve as a signal peptide directing secretion; sequence MGTRYLLVLLLVLLVLGFEVQG. The interval 66–74 is lipid binding; the sequence is TMDEKIRDI. The interval 78–101 is lipoprotein lipase cofactor; that stretch reads STAAVSTYAGIFTDQLLSMLKGDS.

Belongs to the apolipoprotein C2 family. In terms of processing, proapolipoprotein C-II is synthesized as a sialic acid containing glycoprotein which is subsequently desialylated prior to its proteolytic processing. Post-translationally, proapolipoprotein C-II, the major form found in plasma undergoes proteolytic cleavage of its N-terminal hexapeptide to generate apolipoprotein C-II, which occurs as the minor form in plasma. As to expression, highly expressed in the liver. Moderately expressed in the ileum, jejunum and ovary.

Its subcellular location is the secreted. Functionally, component of chylomicrons, very low-density lipoproteins (VLDL), low-density lipoproteins (LDL), and high-density lipoproteins (HDL) in plasma. Plays an important role in lipoprotein metabolism as an activator of lipoprotein lipase. Both proapolipoprotein C-II and apolipoprotein C-II can activate lipoprotein lipase. The sequence is that of Apolipoprotein C-II (APOC2) from Canis lupus familiaris (Dog).